We begin with the raw amino-acid sequence, 52 residues long: KKGVTLREDDRFPCNAGNCACLPLDSYSYTCQSPTSSTANCEGNECVSEADW.

The propeptide occupies 1 to 6 (KKGVTL). Intrachain disulfides connect Cys-14–Cys-31, Cys-19–Cys-41, and Cys-21–Cys-46.

Expressed by the venom duct.

The protein resides in the secreted. Probable neurotoxin with unknown target. Possibly targets ion channels. This chain is Conotoxin Cal9.2b, found in Californiconus californicus (California cone).